Reading from the N-terminus, the 309-residue chain is tRNA pseudouridine synthase B (309 aa).

The Nucleophile role is filled by D51.

Belongs to the pseudouridine synthase TruB family. Type 1 subfamily.

It carries out the reaction uridine(55) in tRNA = pseudouridine(55) in tRNA. Responsible for synthesis of pseudouridine from uracil-55 in the psi GC loop of transfer RNAs. This Coxiella burnetii (strain RSA 493 / Nine Mile phase I) protein is tRNA pseudouridine synthase B.